A 142-amino-acid polypeptide reads, in one-letter code: Hemoglobin subunit alpha (142 aa).

Position 1 is an N-acetylserine (Ser1). The Globin domain occupies 1 to 142 (SLSDKDKAAV…VALALAERYR (142 aa)). His59 is a binding site for O2. Residue His88 participates in heme b binding.

It belongs to the globin family. Heterotetramer of two alpha chains and two beta chains. Red blood cells.

Its function is as follows. Involved in oxygen transport from gills to the various peripheral tissues. In Gymnodraco acuticeps (Antarctic dragonfish), this protein is Hemoglobin subunit alpha (hba).